The following is a 128-amino-acid chain: Fluoride-specific ion channel FluC (128 aa).

Helical transmembrane passes span 5 to 25 (IVAI…LSLA), 35 to 55 (LGTL…AVVF), 67 to 87 (LFVI…SVEV), and 96 to 116 (FGWA…LTAL). Na(+)-binding residues include glycine 75 and threonine 78.

It belongs to the fluoride channel Fluc/FEX (TC 1.A.43) family.

It is found in the cell inner membrane. The catalysed reaction is fluoride(in) = fluoride(out). Na(+) is not transported, but it plays an essential structural role and its presence is essential for fluoride channel function. Fluoride-specific ion channel. Important for reducing fluoride concentration in the cell, thus reducing its toxicity. This Burkholderia lata (strain ATCC 17760 / DSM 23089 / LMG 22485 / NCIMB 9086 / R18194 / 383) protein is Fluoride-specific ion channel FluC.